Reading from the N-terminus, the 78-residue chain is Antitoxin VapB27 (78 aa).

Residues 1–45 (MKAVVDAAGRIVVPKPLREALGLQPGSTVEISRYGAGLHLIPTGR) form the SpoVT-AbrB domain.

The protein belongs to the VapB family. Interacts with cognate toxin VapC27 and non-cognate toxins MazF6 and VapC40. Interaction with MazF6 and MazF9 partially neutralizes the toxins.

In terms of biological role, antitoxin component of a type II toxin-antitoxin (TA) system. Cognate toxin is VapC27. Upon expression in E.coli partially counteracts the ribonuclease activity of non-cognate toxins MazF6 and MazF9. The sequence is that of Antitoxin VapB27 (vapB27) from Mycobacterium tuberculosis (strain ATCC 25618 / H37Rv).